Here is a 699-residue protein sequence, read N- to C-terminus: UvrABC system protein C (699 aa).

The segment covering 1–51 (MIQHPTDTPEVAADAAAEPERAAGAAGATPQPSQDAVEPAADVDAATASLA) has biased composition (low complexity). The segment at 1-59 (MIQHPTDTPEVAADAAAEPERAAGAAGATPQPSQDAVEPAADVDAATASLAAEDDDEPV) is disordered. Positions 92–170 (TSPGVYRMLN…IKQLRPRFNV (79 aa)) constitute a GIY-YIG domain. The UVR domain maps to 280-315 (RLVKQELAGEMEKASAELEFETAALYRDRLAALSAI).

It belongs to the UvrC family. Interacts with UvrB in an incision complex.

Its subcellular location is the cytoplasm. The UvrABC repair system catalyzes the recognition and processing of DNA lesions. UvrC both incises the 5' and 3' sides of the lesion. The N-terminal half is responsible for the 3' incision and the C-terminal half is responsible for the 5' incision. The protein is UvrABC system protein C of Rhodopseudomonas palustris (strain BisB18).